We begin with the raw amino-acid sequence, 131 residues long: DNA-directed RNA polymerase subunit Rpo8 (131 aa).

It belongs to the archaeal Rpo8 RNA polymerase subunit family. In terms of assembly, part of the 13-subunit RNA polymerase complex. Interacts with Rpo1N on the periphery of the clamp head.

Its subcellular location is the cytoplasm. It catalyses the reaction RNA(n) + a ribonucleoside 5'-triphosphate = RNA(n+1) + diphosphate. Its function is as follows. DNA-dependent RNA polymerase (RNAP) catalyzes the transcription of DNA into RNA using the four ribonucleoside triphosphates as substrates. This Saccharolobus shibatae (strain ATCC 51178 / DSM 5389 / JCM 8931 / NBRC 15437 / B12) (Sulfolobus shibatae) protein is DNA-directed RNA polymerase subunit Rpo8.